The chain runs to 132 residues: Gamma-crystallin-5 (132 aa).

The 40-residue stretch at Ile-1 to Pro-40 folds into the Beta/gamma crystallin 'Greek key' 2 domain. The segment at Tyr-41–Gln-45 is connecting peptide. 2 consecutive Beta/gamma crystallin 'Greek key' domains span residues Tyr-46 to Asp-86 and Gly-87 to His-129.

Belongs to the beta/gamma-crystallin family. Monomer.

Functionally, crystallins are the dominant structural components of the vertebrate eye lens. This Xenopus laevis (African clawed frog) protein is Gamma-crystallin-5 (cryg5).